We begin with the raw amino-acid sequence, 144 residues long: Large ribosomal subunit protein uL11 (144 aa).

This sequence belongs to the universal ribosomal protein uL11 family. Part of the ribosomal stalk of the 50S ribosomal subunit. Interacts with L10 and the large rRNA to form the base of the stalk. L10 forms an elongated spine to which L12 dimers bind in a sequential fashion forming a multimeric L10(L12)X complex. One or more lysine residues are methylated.

Functionally, forms part of the ribosomal stalk which helps the ribosome interact with GTP-bound translation factors. This Saccharopolyspora erythraea (strain ATCC 11635 / DSM 40517 / JCM 4748 / NBRC 13426 / NCIMB 8594 / NRRL 2338) protein is Large ribosomal subunit protein uL11.